We begin with the raw amino-acid sequence, 164 residues long: 3-dehydroquinate dehydratase (164 aa).

Y22 serves as the catalytic Proton acceptor. Residues N73, H79, and D86 each contribute to the substrate site. H99 acts as the Proton donor in catalysis. Substrate is bound by residues 100–101 (IS) and R110.

The protein belongs to the type-II 3-dehydroquinase family. As to quaternary structure, homododecamer.

It catalyses the reaction 3-dehydroquinate = 3-dehydroshikimate + H2O. It participates in metabolic intermediate biosynthesis; chorismate biosynthesis; chorismate from D-erythrose 4-phosphate and phosphoenolpyruvate: step 3/7. Catalyzes a trans-dehydration via an enolate intermediate. The polypeptide is 3-dehydroquinate dehydratase (Aliarcobacter butzleri (strain RM4018) (Arcobacter butzleri)).